Here is a 271-residue protein sequence, read N- to C-terminus: Formamidopyrimidine-DNA glycosylase (271 aa).

Residue Pro-2 is the Schiff-base intermediate with DNA of the active site. The active-site Proton donor is Glu-3. The active-site Proton donor; for beta-elimination activity is the Lys-57. Positions 90, 109, and 151 each coordinate DNA. Residues 236–270 form an FPG-type zinc finger; that stretch reads HVYGRGGETCTQCGNLLSEIKLGQRATVFCGLCQP. The active-site Proton donor; for delta-elimination activity is Arg-260.

This sequence belongs to the FPG family. In terms of assembly, monomer. Requires Zn(2+) as cofactor.

The catalysed reaction is Hydrolysis of DNA containing ring-opened 7-methylguanine residues, releasing 2,6-diamino-4-hydroxy-5-(N-methyl)formamidopyrimidine.. It carries out the reaction 2'-deoxyribonucleotide-(2'-deoxyribose 5'-phosphate)-2'-deoxyribonucleotide-DNA = a 3'-end 2'-deoxyribonucleotide-(2,3-dehydro-2,3-deoxyribose 5'-phosphate)-DNA + a 5'-end 5'-phospho-2'-deoxyribonucleoside-DNA + H(+). In terms of biological role, involved in base excision repair of DNA damaged by oxidation or by mutagenic agents. Acts as a DNA glycosylase that recognizes and removes damaged bases. Has a preference for oxidized purines, such as 7,8-dihydro-8-oxoguanine (8-oxoG). Has AP (apurinic/apyrimidinic) lyase activity and introduces nicks in the DNA strand. Cleaves the DNA backbone by beta-delta elimination to generate a single-strand break at the site of the removed base with both 3'- and 5'-phosphates. The sequence is that of Formamidopyrimidine-DNA glycosylase from Shewanella loihica (strain ATCC BAA-1088 / PV-4).